Reading from the N-terminus, the 349-residue chain is tRNA pseudouridine synthase D (349 aa).

Position 27 (F27) interacts with substrate. D80 (nucleophile) is an active-site residue. N129 contacts substrate. One can recognise a TRUD domain in the interval 155 to 303; the sequence is GVPNYFGAQR…VEAARRAMLL (149 aa). A substrate-binding site is contributed by F329.

The protein belongs to the pseudouridine synthase TruD family.

It catalyses the reaction uridine(13) in tRNA = pseudouridine(13) in tRNA. In terms of biological role, responsible for synthesis of pseudouridine from uracil-13 in transfer RNAs. This Klebsiella pneumoniae (strain 342) protein is tRNA pseudouridine synthase D.